Consider the following 478-residue polypeptide: Trigger factor (478 aa).

The 82-residue stretch at 162-243 folds into the PPIase FKBP-type domain; it reads GDFVSIDLSA…VKSIKERELP (82 aa). Residues 424–478 are disordered; that stretch reads KDTDGNDIDTTEFFGPSGGAQAEAEGADEADADSDADSDTEADSDTEADEADEAK. Residues 448–478 show a composition bias toward acidic residues; the sequence is EGADEADADSDADSDTEADSDTEADEADEAK.

It belongs to the FKBP-type PPIase family. Tig subfamily.

It localises to the cytoplasm. It catalyses the reaction [protein]-peptidylproline (omega=180) = [protein]-peptidylproline (omega=0). Its function is as follows. Involved in protein export. Acts as a chaperone by maintaining the newly synthesized protein in an open conformation. Functions as a peptidyl-prolyl cis-trans isomerase. This Mycobacterium sp. (strain KMS) protein is Trigger factor.